The sequence spans 404 residues: NADH-quinone oxidoreductase subunit D 2 (404 aa).

It belongs to the complex I 49 kDa subunit family. NDH-1 is composed of 14 different subunits. Subunits NuoB, C, D, E, F, and G constitute the peripheral sector of the complex.

Its subcellular location is the cell inner membrane. The catalysed reaction is a quinone + NADH + 5 H(+)(in) = a quinol + NAD(+) + 4 H(+)(out). In terms of biological role, NDH-1 shuttles electrons from NADH, via FMN and iron-sulfur (Fe-S) centers, to quinones in the respiratory chain. The immediate electron acceptor for the enzyme in this species is believed to be ubiquinone. Couples the redox reaction to proton translocation (for every two electrons transferred, four hydrogen ions are translocated across the cytoplasmic membrane), and thus conserves the redox energy in a proton gradient. The polypeptide is NADH-quinone oxidoreductase subunit D 2 (Rhizobium etli (strain ATCC 51251 / DSM 11541 / JCM 21823 / NBRC 15573 / CFN 42)).